We begin with the raw amino-acid sequence, 990 residues long: Tyrosine-protein phosphatase 3 (990 aa).

4 disordered regions span residues 47–88 (QSQS…SPSV), 100–193 (NKIN…SNIE), 246–414 (PNQQ…SFSQ), and 431–452 (KPEM…HNDL). Composition is skewed to low complexity over residues 52–88 (NTNT…SPSV) and 100–117 (NKIN…NNNN). Polar residues predominate over residues 127-136 (LKLSNTMIIK). Low complexity-rich tracts occupy residues 137–191 (NNNN…SNSN), 250–271 (SSSS…SSLL), 278–293 (NNST…NSSN), 310–327 (QAQV…QHQQ), and 334–413 (NLSS…TSFS). Residues 422–715 (MRLEFEMIKK…IFIFKVINDV (294 aa)) enclose the Tyrosine-protein phosphatase domain. A compositionally biased stretch (basic residues) spans 437–447 (KKSHKHHQRHY). Residue Cys650 is the Phosphocysteine intermediate of the active site. A compositionally biased stretch (polar residues) spans 786 to 795 (PPQQQQDNPF). Disordered regions lie at residues 786-814 (PPQQ…NISI) and 834-990 (LQQQ…IKCF). Composition is skewed to low complexity over residues 796–806 (SKSSIKISPSP) and 834–850 (LQQQ…DNPP). A compositionally biased stretch (polar residues) spans 851–868 (LNMSSNSIKFPPVTSLSS). 2 stretches are compositionally biased toward low complexity: residues 878–916 (NDNN…DNNG) and 924–968 (GSFL…SDNN).

Belongs to the protein-tyrosine phosphatase family. Non-receptor class subfamily. In terms of tissue distribution, in the anterior-like and prestalk cell types.

The protein resides in the cytoplasm. The catalysed reaction is O-phospho-L-tyrosyl-[protein] + H2O = L-tyrosyl-[protein] + phosphate. Seems to dephosphorylate a protein of 130 kDa (p130). This Dictyostelium discoideum (Social amoeba) protein is Tyrosine-protein phosphatase 3 (ptpC).